We begin with the raw amino-acid sequence, 493 residues long: Alpha-amylase-related protein (493 aa).

The first 19 residues, 1–19, serve as a signal peptide directing secretion; that stretch reads MFKLALTLTLCLAGSLSLA. The residue at position 20 (Gln20) is a Pyrrolidone carboxylic acid. An intrachain disulfide couples Cys47 to Cys103. Ca(2+) is bound by residues Asn117, Gln168, and Asp177. A disulfide bridge links Cys156 with Cys170. Arg205 is a binding site for chloride. The active-site Nucleophile is the Asp207. A Ca(2+)-binding site is contributed by His211. Glu244 (proton donor) is an active-site residue. 2 residues coordinate chloride: Asn307 and Arg342. 3 disulfides stabilise this stretch: Cys375-Cys381, Cys417-Cys440, and Cys447-Cys459.

Belongs to the glycosyl hydrolase 13 family. As to quaternary structure, monomer. Ca(2+) serves as cofactor. It depends on chloride as a cofactor.

It localises to the secreted. The enzyme catalyses Endohydrolysis of (1-&gt;4)-alpha-D-glucosidic linkages in polysaccharides containing three or more (1-&gt;4)-alpha-linked D-glucose units.. The chain is Alpha-amylase-related protein (Amyrel) from Drosophila teissieri (Fruit fly).